The sequence spans 42 residues: Cytochrome b559 subunit beta (42 aa).

Residues 17–33 form a helical membrane-spanning segment; it reads WLAIHGLAVPTVFFLGA. Histidine 21 lines the heme pocket.

The protein belongs to the PsbE/PsbF family. As to quaternary structure, heterodimer of an alpha subunit and a beta subunit. PSII is composed of 1 copy each of membrane proteins PsbA, PsbB, PsbC, PsbD, PsbE, PsbF, PsbH, PsbI, PsbJ, PsbK, PsbL, PsbM, PsbT, PsbX, PsbY, PsbZ, Psb30/Ycf12, at least 3 peripheral proteins of the oxygen-evolving complex and a large number of cofactors. It forms dimeric complexes. It depends on heme b as a cofactor.

It localises to the plastid. The protein localises to the chloroplast thylakoid membrane. Functionally, this b-type cytochrome is tightly associated with the reaction center of photosystem II (PSII). PSII is a light-driven water:plastoquinone oxidoreductase that uses light energy to abstract electrons from H(2)O, generating O(2) and a proton gradient subsequently used for ATP formation. It consists of a core antenna complex that captures photons, and an electron transfer chain that converts photonic excitation into a charge separation. This Guillardia theta (Cryptophyte) protein is Cytochrome b559 subunit beta.